Reading from the N-terminus, the 300-residue chain is UDP-N-acetylenolpyruvoylglucosamine reductase (300 aa).

The region spanning 28-190 is the FAD-binding PCMH-type domain; that stretch reads KIGGRVKYLV…TRAMMSFKKE (163 aa). Residue Arg169 is part of the active site. Residue Ser219 is the Proton donor of the active site. Glu290 is an active-site residue.

The protein belongs to the MurB family. The cofactor is FAD.

It is found in the cytoplasm. The enzyme catalyses UDP-N-acetyl-alpha-D-muramate + NADP(+) = UDP-N-acetyl-3-O-(1-carboxyvinyl)-alpha-D-glucosamine + NADPH + H(+). It functions in the pathway cell wall biogenesis; peptidoglycan biosynthesis. Its function is as follows. Cell wall formation. The sequence is that of UDP-N-acetylenolpyruvoylglucosamine reductase from Thermotoga sp. (strain RQ2).